The following is a 1248-amino-acid chain: Structural polyprotein (1248 aa).

Residues 1–10 (MEFIPTQTFY) are compositionally biased toward polar residues. Residues 1-104 (MEFIPTQTFY…KKKKPGRRER (104 aa)) form a disordered region. The segment at 36-68 (RKAGQLAQLISAVNKLTMRAVPQQKPRKNRKNK) is host transcription inhibition. Over residues 60 to 72 (KPRKNRKNKKQKQ) the composition is skewed to basic residues. Residues 61–99 (PRKNRKNKKQKQKQQAPRNNMNQKKQPPKKKPAQKKKKP) carry the Nuclear localization signal motif. The span at 73 to 85 (KQQAPRNNMNQKK) shows a compositional bias: low complexity. The interval 84–114 (KKQPPKKKPAQKKKKPGRRERMCMKIENDCI) is binding to the viral RNA. Basic residues predominate over residues 86-101 (QPPKKKPAQKKKKPGR). Residues 99-113 (PGRRERMCMKIENDC) form a ribosome-binding region. A disulfide bridge links C113 with C128. A Peptidase S3 domain is found at 113 to 261 (CIFEVKHEGK…KITPEGAEEW (149 aa)). The active-site Charge relay system is H139. Residues 144–154 (IDNADLAKLAF) carry the Nuclear export signal motif. The tract at residues 155-160 (KRSSKY) is interaction with spike glycoprotein E2. The Charge relay system role is filled by D161. The tract at residues 183–193 (PEGYYNWHHGA) is dimerization of the capsid protein. S213 serves as the catalytic Charge relay system. Positions 219 to 223 (DNKGR) are dimerization of the capsid protein. The segment at 262–274 (SLAIPVMCLLANT) is functions as an uncleaved signal peptide for the precursor of protein E3/E2. At 262-692 (SLAIPVMCLL…YYYELYPTMT (431 aa)) the chain is on the extracellular side. 9 disulfide bridges follow: C269–C278, C283–C287, C286–C318, C344–C450, C347–C353, C416–C430, C478–C591, C526–C550, and C528–C545. N273 is a glycosylation site (N-linked (GlcNAc...) asparagine; by host). Interaction with host Mxra8 receptor regions lie at residues 351-354 (HSCH) and 387-389 (HDW). Interaction with host Mxra8 receptor regions lie at residues 509-512 (QSGN) and 541-547 (VINNCKV). Residues N588 and N670 are each glycosylated (N-linked (GlcNAc...) asparagine; by host). Residues 693-713 (VVVVSVASFVLLSMVGVAVGM) traverse the membrane as a helical segment. The Cytoplasmic segment spans residues 714 to 748 (CMCARRRCITPYELTPGATVPFLLSLICCIRTAKA). Positions 716 to 720 (CARRR) are interaction with the capsid protein. Residues C721, C741, and C742 are each lipidated (S-palmitoyl cysteine; by host). The transient transmembrane before p62-6K protein processing stretch occupies residues 721–741 (CITPYELTPGATVPFLLSLIC). C721 and C742 are joined by a disulfide. Residues 749-763 (ATYQEAAVYLWNEQQ) lie on the Extracellular side of the membrane. A helical transmembrane segment spans residues 764–784 (PLFWLQAIIPLAALIVLCNCL). The Cytoplasmic portion of the chain corresponds to 785 to 795 (RLLPCCCKTLT). A helical membrane pass occupies residues 796 to 816 (FLAVMSVGAHTVSAYEHVTVI). The Extracellular portion of the chain corresponds to 817–1224 (PNTVGVPYKT…AMSWVQKITG (408 aa)). 3 disulfides stabilise this stretch: C858/C923, C871/C903, and C877/C887. The E1 fusion peptide loop stretch occupies residues 893–910 (VYPFMWGGAYCFCDTENT). N-linked (GlcNAc...) asparagine; by host glycosylation is found at N950 and N1079. Intrachain disulfides connect C1068–C1080, C1110–C1185, C1115–C1189, and C1137–C1179. A helical membrane pass occupies residues 1225-1245 (GVGLVVAVAALILIVVLCVSF). C1242 carries S-palmitoyl cysteine; by host lipidation. Topologically, residues 1246–1248 (SRH) are cytoplasmic.

Homodimer. Homomultimer. Interacts with host karyopherin KPNA4; this interaction allows the nuclear import of the viral capsid protein. Interacts with spike glycoprotein E2. Interacts with host IRAK1; the interaction leads to inhibition of IRAK1-dependent signaling. As to quaternary structure, the precursor of protein E3/E2 and E1 form a heterodimer shortly after synthesis. In terms of assembly, interacts with spike glycoprotein E2. The precursor of protein E3/E2 and E1 form a heterodimer shortly after synthesis. Processing of the precursor of protein E3/E2 into E2 and E3 results in a heterodimer of the spike glycoproteins E2 and E1. Spike at virion surface are constituted of three E2-E1 heterodimers. After target cell attachment and endocytosis, E1 change conformation to form homotrimers. Interacts with 6K protein. Interacts with host MXRA8; this interaction mediates virus entry. The interaction involves 2 adjacent E2-E1 heterodimers. Interacts with spike glycoprotein E1. Processing of the precursor of protein E3/E2 into E2 and E3 results in a heterodimer of the spike glycoproteins E2 and E1. Spike at virion surface are constituted of a trimer of E2-E1 heterodimers. Interacts with 6K protein. Interacts with host MXRA8; this interaction mediates virus entry. The interaction involves 2 adjacent E2-E1 heterodimers. As to quaternary structure, oligomer. Interacts with spike glycoprotein E1. Interacts with spike glycoprotein E2. Structural polyprotein: Specific enzymatic cleavages in vivo yield mature proteins. Capsid protein is auto-cleaved during polyprotein translation, unmasking a signal peptide at the N-terminus of the precursor of E3/E2. The remaining polyprotein is then targeted to the host endoplasmic reticulum, where host signal peptidase cleaves it into pE2, 6K and E1 proteins. pE2 is further processed to mature E3 and E2 by host furin in trans-Golgi vesicle. Post-translationally, palmitoylated via thioester bonds. These palmitoylations may induce disruption of the C-terminus transmembrane. This would result in the reorientation of E2 C-terminus from lumenal to cytoplasmic side. In terms of processing, N-glycosylated. Palmitoylated via thioester bonds.

The protein localises to the virion. The protein resides in the host cytoplasm. Its subcellular location is the host cell membrane. It is found in the host nucleus. It localises to the virion membrane. The protein localises to the host Golgi apparatus. The protein resides in the host trans-Golgi network. Its subcellular location is the host endoplasmic reticulum. The catalysed reaction is Autocatalytic release of the core protein from the N-terminus of the togavirus structural polyprotein by hydrolysis of a -Trp-|-Ser- bond.. Forms an icosahedral capsid with a T=4 symmetry composed of 240 copies of the capsid protein surrounded by a lipid membrane through which penetrate 80 spikes composed of trimers of E1-E2 heterodimers. The capsid protein binds to the viral RNA genome at a site adjacent to a ribosome binding site for viral genome translation following genome release. Possesses a protease activity that results in its autocatalytic cleavage from the nascent structural protein. Following its self-cleavage, the capsid protein transiently associates with ribosomes, and within several minutes the protein binds to viral RNA and rapidly assembles into icosahedric core particles. The resulting nucleocapsid eventually associates with the cytoplasmic domain of the spike glycoprotein E2 at the cell membrane, leading to budding and formation of mature virions. In case of infection, new virions attach to target cells and after clathrin-mediated endocytosis their membrane fuses with the host endosomal membrane. This leads to the release of the nucleocapsid into the cytoplasm, followed by an uncoating event necessary for the genomic RNA to become accessible. The uncoating might be triggered by the interaction of capsid proteins with ribosomes. Binding of ribosomes would release the genomic RNA since the same region is genomic RNA-binding and ribosome-binding. Specifically inhibits interleukin-1 receptor-associated kinase 1/IRAK1-dependent signaling during viral entry, representing a means by which the alphaviruses may evade innate immune detection and activation prior to viral gene expression. Degrades host cyclic GMP-AMP synthase (CGAS) thereby inhibiting the cGAS-STING pathway. Its function is as follows. Provides the signal sequence for the translocation of the precursor of protein E3/E2 to the host endoplasmic reticulum. Furin-cleaved E3 remains associated with spike glycoprotein E1 and mediates pH protection of the latter during the transport via the secretory pathway. After virion release from the host cell, the assembly protein E3 is gradually released in the extracellular space. In terms of biological role, plays a role in viral attachment to target host cell, by binding to the cell receptor MXRA8. Synthesized as a p62 precursor which is processed by furin at the cell membrane just before virion budding, giving rise to E2-E1 heterodimer. The p62-E1 heterodimer is stable, whereas E2-E1 is unstable and dissociate at low pH. p62 is processed at the last step, presumably to avoid E1 fusion activation before its final export to cell surface. E2 C-terminus contains a transitory transmembrane that would be disrupted by palmitoylation, resulting in reorientation of the C-terminal tail from lumenal to cytoplasmic side. This step is critical since E2 C-terminus is involved in budding by interacting with capsid proteins. This release of E2 C-terminus in cytoplasm occurs lately in protein export, and precludes premature assembly of particles at the endoplasmic reticulum membrane. Functionally, acts as a viroporin that participates in virus glycoprotein processing and transport to the plasma membrane, cell permeabilization and budding of viral particles. Disrupts the calcium homeostasis of the cell, probably at the endoplasmic reticulum level. This leads to cytoplasmic calcium elevation. Because of its lipophilic properties, the 6K protein is postulated to influence the selection of lipids that interact with the transmembrane domains of the glycoproteins, which, in turn, affects the deformability of the bilayer required for the extreme curvature that occurs as budding proceeds. Present in low amount in virions, about 3% compared to viral glycoproteins. Class II viral fusion protein. Fusion activity is inactive as long as E1 is bound to E2 in mature virion. After virus attachment to target cell via host MXRA8 and endocytosis, acidification of the endosome induce dissociation of E1/E2 heterodimer and concomitant trimerization of the E1 subunits. This E1 trimer is fusion active, and promotes release of viral nucleocapsid in cytoplasm after endosome and viral membrane fusion. Efficient fusion requires the presence of cholesterol and sphingolipid in the target membrane. This Chikungunya virus (strain Nagpur) (CHIKV) protein is Structural polyprotein.